We begin with the raw amino-acid sequence, 816 residues long: Chitin synthase 1 (816 aa).

Positions 1–21 are disordered; it reads MLSQGEILRNPSRTRLQRPPK. Residues 1 to 32 are Cytoplasmic-facing; the sequence is MLSQGEILRNPSRTRLQRPPKSRSERKGWWYR. A helical transmembrane segment spans residues 33–53; the sequence is VTIFLTCLIPNFMLRCFGMTT. The Extracellular portion of the chain corresponds to 54-63; the sequence is PEVQHAWREK. A helical transmembrane segment spans residues 64 to 84; that stretch reads VALCICIFFCWIILGFTTYGM. Topologically, residues 85–240 are cytoplasmic; it reads NTIICKGSNQ…TPGCLLADTM (156 aa). Residues 241–261 form a helical membrane-spanning segment; that stretch reads FWITTISIFGLIITKFLLGFF. Residues 262-697 are Extracellular-facing; the sequence is YSWYAKRRPK…QLVVVMELFG (436 aa). Residues Asn319 and Asn664 are each glycosylated (N-linked (GlcNAc...) asparagine). Residues 698–718 form a helical membrane-spanning segment; sequence TLVLPAAIIFTFVMIAVSILI. At 719–720 the chain is on the cytoplasmic side; the sequence is EP. Residues 721-741 traverse the membrane as a helical segment; the sequence is AWVPLIMLVGIFGLPAVLILI. At 742-745 the chain is on the extracellular side; the sequence is TTME. Residues 746–766 traverse the membrane as a helical segment; that stretch reads IQYVFWCLVYILSIPIWNFVL. Topologically, residues 767–816 are cytoplasmic; sequence PTYAFWHFDNFSWGDTRKVDGEGKEDEEGEFDHTKIRIRELEEFLSEANK.

The protein belongs to the chitin synthase family. Class IV subfamily.

Its subcellular location is the cell membrane. The enzyme catalyses [(1-&gt;4)-N-acetyl-beta-D-glucosaminyl](n) + UDP-N-acetyl-alpha-D-glucosamine = [(1-&gt;4)-N-acetyl-beta-D-glucosaminyl](n+1) + UDP + H(+). Polymerizes chitin, a structural polymer of the cell wall and septum, by transferring the sugar moiety of UDP-GlcNAc to the non-reducing end of the growing chitin polymer. The protein is Chitin synthase 1 (CHS1) of Encephalitozoon cuniculi (strain GB-M1) (Microsporidian parasite).